Consider the following 702-residue polypeptide: MRLSVIILAIFMISLFIMAAFLFFKRRRLDGSYHLPSLAKPTYRKLTQDDYGVISDYLSYFGTSKFSAGYSLQNFPEIPTKGEVVTTLRNIVNRFAGSSEGINHWRYYIDAVEIHIPPLLVPYLQQENVLDVVCTPSIPIVIGVNGHFLKDEKSHFSALSLKQLSEPILSNGTSTIQKNEGDAAHLLHIRQETNEEYRLHHSSGFWNGSLICLGLILWLTALMMPQVFLPWIMAAGGTFLVLGLFLIYRPIIKSRKQEVHCFKGRLKRWGLFGNFDHGQVKNISLGGIDLVYPPHWEPYIQNDIDKVTYLEMYPNHHVIKQGPYLSLHDEEKNYPYKRYIKNIIFVVCSLFIIGMLYLYQPLSLSMKLTFSWIKESEPHLVTNFTELETAKLHVGDIIQAKGVGMCYMPPNLSSKNNKTIFAPFDCSGIYWNNSNPMPMPESSTIEKAAALLYLVEEQLHPVSNNRVNPSLGQAITKSGMNLLDNFDGIILKTQDLCPRENECIRLKMALVNLSNVNDWPSLVQRAESGKLTGTNVLLRAVSAEALEKLVDTTTSSFIYREIDKAAILLNSPPPGGVLLISDERKQLVDYASNTNSVFEPTPLEQWRELQRLSDILLHTPFNTGGVITGMVIDANGTLQIFLHSMPDSMTLLYYIGNTLLLFFAIGFLILNLFFIIRRRRQNNQRMHKISQYYEHCFYRPPQ.

Transmembrane regions (helical) follow at residues 4-24 (SVII…FLFF), 204-224 (GFWN…ALMM), 227-247 (VFLP…LFLI), 343-363 (IIFV…QPLS), and 656-676 (GNTL…FFII).

This sequence belongs to the IgaA family.

It is found in the cell inner membrane. In terms of biological role, up-regulator of flagellar flhDC master operon. The protein is Flagellar operon control protein UmoB (umoB) of Proteus mirabilis.